The primary structure comprises 275 residues: Adenylate kinase 2 (275 aa).

A lipid anchor (N-myristoyl glycine) is attached at Gly2. The interval 21–30 (KKKEKKKKKK) is required for cell membrane translocation but dispensable for cell membrane localization. An ATP-binding site is contributed by 39 to 44 (GSGKDT). The segment at 59–97 (CISKLLKEYKEEYNKENVLNEEENYFDEIEKCMIDGSLV) is NMP. AMP-binding positions include 95-97 (SLV), 126-129 (GFPR), and Gln133. ATP is bound at residue Arg164. The LID stretch occupies residues 165–214 (IIDPITNISYNENIIQIIKKKREGQELSDKEQKQLIIDNHLYNNLSNDIL). Residues Arg220 and Arg231 each contribute to the AMP site.

The protein belongs to the adenylate kinase family. Monomer. Oligomer. Heterodimer composed of NMT and AK2; AK2 myristoylation stabilizes the complex. Post-translationally, myristoylation is required for cell membrane localization. May be palmitoylated at Cys-4 which stabilizes cell membrane localization of the myristoylated protein.

The protein resides in the parasitophorous vacuole membrane. It carries out the reaction AMP + ATP = 2 ADP. Functionally, catalyzes the reversible transfer of the terminal phosphate group between ATP and AMP. Has very low activity with CTP, GTP, ITP and UTP and no activity with GMP, UMP or IMP in vitro. This is Adenylate kinase 2 from Plasmodium falciparum (isolate 3D7).